We begin with the raw amino-acid sequence, 247 residues long: Particulate methane monooxygenase beta subunit (247 aa).

The next 6 membrane-spanning stretches (helical) occupy residues 23 to 43, 59 to 79, 86 to 106, 111 to 131, 145 to 165, and 215 to 235; these read WMAL…HAML, LWVT…QSYL, PWGA…NRYF, WTYF…AIIL, AIVG…PIIA, and VSAF…HFIG.

In terms of assembly, m.capsulatus has two forms of methane monooxygenase, a soluble (sMMO) and a membrane-bound (particulate) type (pMMO). The particulate type is a nonamer composed of three alpha:beta:gamma heterotrimeric protomers assembled into a cylindrical structure; the beta and gamma subunits comprise the bulk of the membrane-spanning regions and the soluble regions are derived primarily from alpha subunits which form two antiparallel beta-barrel-like structures each. This assembly, also called pMMO hydroxylase (pMMO-H), is proposed to associate with methanol dehydrogenase (MDH), also designated as pMMO-R, to form the pMMO-C complex which seems to have greater methane monooxygenase activity.

It localises to the membrane. The enzyme catalyses methane + a quinol + O2 = methanol + a quinone + H2O. Functionally, non-catalytic subunit of the methane monooxygenase that is responsible for the initial oxygenation of methane to methanol in methanotrophs. At least in vitro, specific quinols can replace NADH as reductants. This Methylococcus capsulatus (strain ATCC 33009 / NCIMB 11132 / Bath) protein is Particulate methane monooxygenase beta subunit (pmoA1).